A 365-amino-acid chain; its full sequence is 1-aminocyclopropane-1-carboxylate oxidase homolog 9 (365 aa).

The Fe2OG dioxygenase domain maps to 214 to 313; sequence KGLLMLCHYY…RISVACFVSS (100 aa). Fe cation is bound by residues histidine 238, aspartate 240, and histidine 294. Arginine 304 serves as a coordination point for 2-oxoglutarate.

It belongs to the iron/ascorbate-dependent oxidoreductase family. Fe(2+) is required as a cofactor.

The polypeptide is 1-aminocyclopropane-1-carboxylate oxidase homolog 9 (Arabidopsis thaliana (Mouse-ear cress)).